Here is a 418-residue protein sequence, read N- to C-terminus: Glutamyl-tRNA reductase (418 aa).

Substrate contacts are provided by residues 49–52, S109, 114–116, and Q120; these read TCNR and EPQ. The active-site Nucleophile is the C50. Residue 189 to 194 coordinates NADP(+); it reads GAGETI.

The protein belongs to the glutamyl-tRNA reductase family. In terms of assembly, homodimer.

It catalyses the reaction (S)-4-amino-5-oxopentanoate + tRNA(Glu) + NADP(+) = L-glutamyl-tRNA(Glu) + NADPH + H(+). Its pathway is porphyrin-containing compound metabolism; protoporphyrin-IX biosynthesis; 5-aminolevulinate from L-glutamyl-tRNA(Glu): step 1/2. In terms of biological role, catalyzes the NADPH-dependent reduction of glutamyl-tRNA(Glu) to glutamate 1-semialdehyde (GSA). In Cronobacter sakazakii (strain ATCC BAA-894) (Enterobacter sakazakii), this protein is Glutamyl-tRNA reductase.